The chain runs to 521 residues: 2-isopropylmalate synthase (521 aa).

The region spanning valine 12 to threonine 274 is the Pyruvate carboxyltransferase domain. Residues aspartate 21, histidine 209, histidine 211, and asparagine 245 each coordinate Mn(2+). The regulatory domain stretch occupies residues lysine 398–serine 521.

Belongs to the alpha-IPM synthase/homocitrate synthase family. LeuA type 1 subfamily. As to quaternary structure, homodimer. It depends on Mn(2+) as a cofactor.

The protein localises to the cytoplasm. The enzyme catalyses 3-methyl-2-oxobutanoate + acetyl-CoA + H2O = (2S)-2-isopropylmalate + CoA + H(+). It functions in the pathway amino-acid biosynthesis; L-leucine biosynthesis; L-leucine from 3-methyl-2-oxobutanoate: step 1/4. In terms of biological role, catalyzes the condensation of the acetyl group of acetyl-CoA with 3-methyl-2-oxobutanoate (2-ketoisovalerate) to form 3-carboxy-3-hydroxy-4-methylpentanoate (2-isopropylmalate). This chain is 2-isopropylmalate synthase, found in Rhodopseudomonas palustris (strain BisB18).